The primary structure comprises 126 residues: 5-hydroxyisourate hydrolase (126 aa).

3 residues coordinate substrate: histidine 16, arginine 54, and tyrosine 123.

This sequence belongs to the transthyretin family. 5-hydroxyisourate hydrolase subfamily. In terms of assembly, homotetramer.

It catalyses the reaction 5-hydroxyisourate + H2O = 5-hydroxy-2-oxo-4-ureido-2,5-dihydro-1H-imidazole-5-carboxylate + H(+). Its function is as follows. Catalyzes the hydrolysis of 5-hydroxyisourate (HIU) to 2-oxo-4-hydroxy-4-carboxy-5-ureidoimidazoline (OHCU). This chain is 5-hydroxyisourate hydrolase, found in Pseudomonas aeruginosa (strain ATCC 15692 / DSM 22644 / CIP 104116 / JCM 14847 / LMG 12228 / 1C / PRS 101 / PAO1).